The following is a 346-amino-acid chain: Protein STAR1 (346 aa).

The segment at 23–48 (QRPPPNGTVHACSKSRPPQLEPGKVG) is disordered. Residues 112–344 (IRVRGLTRRS…KHPMARRFLE (233 aa)) form the ABC transporter domain. ATP is bound at residue 146 to 153 (GPSGSGKS).

Belongs to the ABC transporter superfamily. ABCI family. In terms of assembly, interacts with STAR2. In terms of tissue distribution, expressed in roots.

The protein resides in the membrane. Functionally, associates with STAR2 to form a functional transmembrane ABC transporter required for detoxification of aluminum (Al) in roots. Can specifically transport UDP-glucose. This Oryza sativa subsp. japonica (Rice) protein is Protein STAR1.